A 636-amino-acid chain; its full sequence is Golgin subfamily A member 8F (636 aa).

2 disordered regions span residues 1-72 (MAEE…SATL) and 107-127 (NKQV…KQKA). Residues 38–50 (TNGSIHETATSGG) are compositionally biased toward polar residues. Coiled coils occupy residues 93–148 (VSQL…LNTD), 211–263 (LEQS…MSQE), and 306–412 (EVEL…QQKQ). Residues 109–127 (QVEHQLEEEKKANNEKQKA) are compositionally biased toward basic and acidic residues. Disordered regions lie at residues 344–364 (LREQ…QEER), 422–449 (ALPG…SIPQ), 496–537 (PITK…GVAA), and 588–612 (PVQG…QDHQ). Residues 429–441 (GGGHLDSEGEEAP) are compositionally biased toward basic and acidic residues. A compositionally biased stretch (gly residues) spans 509–522 (PGGGHHQAGPGQGG).

Belongs to the GOLGA8 family.

The sequence is that of Golgin subfamily A member 8F from Homo sapiens (Human).